Here is a 444-residue protein sequence, read N- to C-terminus: E3 ubiquitin-protein ligase APD2 (444 aa).

A compositionally biased stretch (low complexity) spans 1–15; that stretch reads MSLPDSLPSSSSSPP. The segment at 1–41 is disordered; the sequence is MSLPDSLPSSSSSPPVTREETGFHRFEHHGNDSGFDHRDRP. The segment covering 17-41 has biased composition (basic and acidic residues); the sequence is TREETGFHRFEHHGNDSGFDHRDRP. Helical transmembrane passes span 74–94 and 312–332; these read VVVVATFCIFVSMTLILGLYG and IAYIVCMGVVTALLLIVSSLF. Residues 393–432 form an RING-type zinc finger; the sequence is CAICYDAPRDCFFLSCGHCVACFQCGTRIAETSGFCPVCR.

In terms of assembly, interacts with At1g78040, At1g10650, VHA-c4/AVAP4, VHA-c''2/VMA16 and TUFA. Expressed in the shoot apical meristems (SAM), root tips, pollen and inflorescences.

It localises to the endomembrane system. It catalyses the reaction S-ubiquitinyl-[E2 ubiquitin-conjugating enzyme]-L-cysteine + [acceptor protein]-L-lysine = [E2 ubiquitin-conjugating enzyme]-L-cysteine + N(6)-ubiquitinyl-[acceptor protein]-L-lysine.. It functions in the pathway protein modification; protein ubiquitination. In terms of biological role, exhibits E2-dependent E3 ligase activity. Involved in pollen mitosis II (PMII) regulation during male gametogenesis. This Arabidopsis thaliana (Mouse-ear cress) protein is E3 ubiquitin-protein ligase APD2.